A 182-amino-acid chain; its full sequence is Peptidoglycan-recognition protein SB2 (182 aa).

The signal sequence occupies residues 1–17 (MKLQLALVLCGLTLALG). One can recognise an N-acetylmuramoyl-L-alanine amidase domain in the interval 40–165 (PVRLIIIHHT…CQTKATACPG (126 aa)). Position 47 (His-47) interacts with Zn(2+). Cys-54 and Cys-60 are joined by a disulfide. A glycan (N-linked (GlcNAc...) asparagine) is linked at Asn-149. Zn(2+) contacts are provided by His-155 and Cys-163.

The protein belongs to the N-acetylmuramoyl-L-alanine amidase 2 family. Requires Zn(2+) as cofactor.

Its subcellular location is the secreted. The enzyme catalyses Hydrolyzes the link between N-acetylmuramoyl residues and L-amino acid residues in certain cell-wall glycopeptides.. N-acetylmuramyl-L-alanine amidase involved in innate immunity by degrading bacterial peptidoglycans (PGN). Probably plays a scavenger role by digesting biologically active PGN into biologically inactive fragments. Has no direct bacteriolytic activity. The chain is Peptidoglycan-recognition protein SB2 (PGRP-SB2) from Drosophila simulans (Fruit fly).